Reading from the N-terminus, the 118-residue chain is Large ribosomal subunit protein eL18 (118 aa).

Belongs to the eukaryotic ribosomal protein eL18 family.

This is Large ribosomal subunit protein eL18 from Sulfurisphaera tokodaii (strain DSM 16993 / JCM 10545 / NBRC 100140 / 7) (Sulfolobus tokodaii).